The sequence spans 429 residues: 3-phosphoshikimate 1-carboxyvinyltransferase (429 aa).

Positions 21, 22, and 26 each coordinate 3-phosphoshikimate. Residue lysine 21 participates in phosphoenolpyruvate binding. Residues glycine 94 and arginine 122 each coordinate phosphoenolpyruvate. 4 residues coordinate 3-phosphoshikimate: serine 167, glutamine 169, aspartate 315, and lysine 342. Position 169 (glutamine 169) interacts with phosphoenolpyruvate. Aspartate 315 (proton acceptor) is an active-site residue. Residues arginine 346 and arginine 388 each coordinate phosphoenolpyruvate.

It belongs to the EPSP synthase family. Monomer.

Its subcellular location is the cytoplasm. It carries out the reaction 3-phosphoshikimate + phosphoenolpyruvate = 5-O-(1-carboxyvinyl)-3-phosphoshikimate + phosphate. It participates in metabolic intermediate biosynthesis; chorismate biosynthesis; chorismate from D-erythrose 4-phosphate and phosphoenolpyruvate: step 6/7. Catalyzes the transfer of the enolpyruvyl moiety of phosphoenolpyruvate (PEP) to the 5-hydroxyl of shikimate-3-phosphate (S3P) to produce enolpyruvyl shikimate-3-phosphate and inorganic phosphate. In Desulforudis audaxviator (strain MP104C), this protein is 3-phosphoshikimate 1-carboxyvinyltransferase.